The chain runs to 356 residues: Probable D-xylulose reductase A (356 aa).

Residues Cys45, His70, and Glu71 each contribute to the Zn(2+) site. 180–185 contacts NAD(+); it reads GAGPVG.

This sequence belongs to the zinc-containing alcohol dehydrogenase family. It depends on Zn(2+) as a cofactor.

The catalysed reaction is xylitol + NAD(+) = D-xylulose + NADH + H(+). Its pathway is carbohydrate degradation; L-arabinose degradation via L-arabinitol; D-xylulose 5-phosphate from L-arabinose (fungal route): step 4/5. Functionally, xylitol dehydrogenase which catalyzes the conversion of xylitol to D-xylulose. Xylose is a major component of hemicelluloses such as xylan. Most fungi utilize D-xylose via three enzymatic reactions, xylose reductase (XR), xylitol dehydrogenase (XDH), and xylulokinase, to form xylulose 5-phosphate, which enters pentose phosphate pathway. The chain is Probable D-xylulose reductase A (xdhA) from Arthroderma otae (strain ATCC MYA-4605 / CBS 113480) (Microsporum canis).